We begin with the raw amino-acid sequence, 267 residues long: 4-hydroxy-tetrahydrodipicolinate reductase (267 aa).

10 to 15 (GCLGKQ) contacts NAD(+). Arginine 37 contributes to the NADP(+) binding site. NAD(+) contacts are provided by residues 99–101 (GTT) and 122–125 (TTNV). Histidine 154 serves as the catalytic Proton donor/acceptor. Histidine 155 lines the (S)-2,3,4,5-tetrahydrodipicolinate pocket. Lysine 158 acts as the Proton donor in catalysis. 164-165 (GT) contacts (S)-2,3,4,5-tetrahydrodipicolinate.

This sequence belongs to the DapB family.

Its subcellular location is the cytoplasm. It carries out the reaction (S)-2,3,4,5-tetrahydrodipicolinate + NAD(+) + H2O = (2S,4S)-4-hydroxy-2,3,4,5-tetrahydrodipicolinate + NADH + H(+). It catalyses the reaction (S)-2,3,4,5-tetrahydrodipicolinate + NADP(+) + H2O = (2S,4S)-4-hydroxy-2,3,4,5-tetrahydrodipicolinate + NADPH + H(+). The protein operates within amino-acid biosynthesis; L-lysine biosynthesis via DAP pathway; (S)-tetrahydrodipicolinate from L-aspartate: step 4/4. Catalyzes the conversion of 4-hydroxy-tetrahydrodipicolinate (HTPA) to tetrahydrodipicolinate. The protein is 4-hydroxy-tetrahydrodipicolinate reductase of Ehrlichia canis (strain Jake).